We begin with the raw amino-acid sequence, 332 residues long: L-lactate dehydrogenase A chain (332 aa).

Ala2 is modified (N-acetylalanine). At Lys5 the chain carries N6-acetyllysine; alternate. Lys5 carries the post-translational modification N6-succinyllysine; alternate. At Lys14 the chain carries N6-acetyllysine. 29 to 57 (GAVGMACAISILMKDLADEVALVDVMEDK) serves as a coordination point for NAD(+). Lys57 carries the post-translational modification N6-acetyllysine; alternate. Lys57 participates in a covalent cross-link: Glycyl lysine isopeptide (Lys-Gly) (interchain with G-Cter in SUMO2); alternate. Lys81 is subject to N6-acetyllysine. Arg106 contributes to the substrate binding site. Lys118 bears the N6-acetyllysine; alternate mark. Lys118 is modified (N6-succinyllysine; alternate). Position 126 is an N6-acetyllysine (Lys126). Asn138 lines the NAD(+) pocket. Substrate contacts are provided by Asn138 and Arg169. His193 functions as the Proton acceptor in the catalytic mechanism. N6-acetyllysine is present on residues Lys224 and Lys232. Position 239 is a phosphotyrosine (Tyr239). Lys243 bears the N6-acetyllysine mark. Residue Thr248 participates in substrate binding. Residue Thr309 is modified to Phosphothreonine. Lys318 carries the post-translational modification N6-acetyllysine; alternate. Lys318 is modified (N6-succinyllysine; alternate). Phosphothreonine is present on Thr322.

The protein belongs to the LDH/MDH superfamily. LDH family. As to quaternary structure, homotetramer. Interacts with PTEN upstream reading frame protein MP31. ISGylated.

The protein resides in the cytoplasm. It catalyses the reaction (S)-lactate + NAD(+) = pyruvate + NADH + H(+). Its pathway is fermentation; pyruvate fermentation to lactate; (S)-lactate from pyruvate: step 1/1. Interconverts simultaneously and stereospecifically pyruvate and lactate with concomitant interconversion of NADH and NAD(+). This is L-lactate dehydrogenase A chain (LDHA) from Bos taurus (Bovine).